We begin with the raw amino-acid sequence, 475 residues long: Zinc-regulated GTPase metalloprotein activator 1 (475 aa).

Residue 50–57 (GFLGSGKT) participates in GTP binding. Residues C116, C118, and C119 each contribute to the Zn(2+) site. Positions 116–119 (CICC) match the CXCC motif motif. GTP is bound by residues 119–123 (CTMRE) and 229–232 (NKCD). Residues 302–420 (IKSFIYKARR…LIESELNNCL (119 aa)) form the CobW C-terminal domain. The stretch at 440-467 (IQLDEELEEEELEEEEEEGEYKDEIEMK) forms a coiled coil. Acidic residues predominate over residues 445–460 (ELEEEELEEEEEEGEY). The interval 445–475 (ELEEEELEEEEEEGEYKDEIEMKVDGSKFKK) is disordered. A compositionally biased stretch (basic and acidic residues) spans 461–475 (KDEIEMKVDGSKFKK).

This sequence belongs to the SIMIBI class G3E GTPase family. ZNG1 subfamily.

The catalysed reaction is GTP + H2O = GDP + phosphate + H(+). Its function is as follows. Zinc chaperone that directly transfers zinc cofactor to target metalloproteins, thereby activating them. Zinc is transferred from the CXCC motif in the GTPase domain to the zinc binding site in target proteins in a process requiring GTP hydrolysis. The polypeptide is Zinc-regulated GTPase metalloprotein activator 1 (Dictyostelium discoideum (Social amoeba)).